We begin with the raw amino-acid sequence, 125 residues long: Transmembrane protein 14EP (125 aa).

Helical transmembrane passes span 9–29 (VPLY…GISG) and 81–101 (ILTL…LIVS).

Belongs to the TMEM14 family.

It localises to the membrane. The polypeptide is Transmembrane protein 14EP (TMEM14EP) (Homo sapiens (Human)).